The chain runs to 296 residues: Formamidopyrimidine-DNA glycosylase (296 aa).

Proline 2 acts as the Schiff-base intermediate with DNA in catalysis. The active-site Proton donor is glutamate 3. The active-site Proton donor; for beta-elimination activity is the lysine 58. DNA contacts are provided by histidine 104, arginine 126, and lysine 169. The FPG-type zinc-finger motif lies at 260 to 296 (SVYDREGQACGTPGCGGTVARIVQAGRSTFYCAACQK). The Proton donor; for delta-elimination activity role is filled by arginine 286.

It belongs to the FPG family. As to quaternary structure, monomer. The cofactor is Zn(2+).

It carries out the reaction Hydrolysis of DNA containing ring-opened 7-methylguanine residues, releasing 2,6-diamino-4-hydroxy-5-(N-methyl)formamidopyrimidine.. The catalysed reaction is 2'-deoxyribonucleotide-(2'-deoxyribose 5'-phosphate)-2'-deoxyribonucleotide-DNA = a 3'-end 2'-deoxyribonucleotide-(2,3-dehydro-2,3-deoxyribose 5'-phosphate)-DNA + a 5'-end 5'-phospho-2'-deoxyribonucleoside-DNA + H(+). Functionally, involved in base excision repair of DNA damaged by oxidation or by mutagenic agents. Acts as a DNA glycosylase that recognizes and removes damaged bases. Has a preference for oxidized purines, such as 7,8-dihydro-8-oxoguanine (8-oxoG). Has AP (apurinic/apyrimidinic) lyase activity and introduces nicks in the DNA strand. Cleaves the DNA backbone by beta-delta elimination to generate a single-strand break at the site of the removed base with both 3'- and 5'-phosphates. The sequence is that of Formamidopyrimidine-DNA glycosylase from Rhizobium etli (strain CIAT 652).